Reading from the N-terminus, the 149-residue chain is Nucleoside diphosphate kinase (149 aa).

ATP contacts are provided by Lys9, Phe57, Arg85, Thr91, Arg102, and Asn112. Residue His115 is the Pros-phosphohistidine intermediate of the active site.

It belongs to the NDK family. As to quaternary structure, homotetramer. It depends on Mg(2+) as a cofactor.

It localises to the cytoplasm. The catalysed reaction is a 2'-deoxyribonucleoside 5'-diphosphate + ATP = a 2'-deoxyribonucleoside 5'-triphosphate + ADP. It carries out the reaction a ribonucleoside 5'-diphosphate + ATP = a ribonucleoside 5'-triphosphate + ADP. In terms of biological role, major role in the synthesis of nucleoside triphosphates other than ATP. The ATP gamma phosphate is transferred to the NDP beta phosphate via a ping-pong mechanism, using a phosphorylated active-site intermediate. In Acaryochloris marina (strain MBIC 11017), this protein is Nucleoside diphosphate kinase.